The following is a 128-amino-acid chain: MDGGLCFNSWSDYLGLSSLISRGLQPREGGESPRPRWKASSPTPAEPLPSKAAEAHGHKGCGFCRSNREAQSLYSSHRLRAPDGRVLCPVLRGYTCPLCGANGDWAHTMRYCPLRHFLRHPHSPRDGQ.

Residues 7–23 are essential for its translational repressor activity; it reads FNSWSDYLGLSSLISRG. The tract at residues 23–58 is disordered; sequence GLQPREGGESPRPRWKASSPTPAEPLPSKAAEAHGH. The Nanos-type zinc-finger motif lies at 60 to 114; it reads GCGFCRSNREAQSLYSSHRLRAPDGRVLCPVLRGYTCPLCGANGDWAHTMRYCPL. 8 residues coordinate Zn(2+): Cys-61, Cys-64, His-77, Cys-88, Cys-96, Cys-99, His-107, and Cys-112. 2 consecutive short sequence motifs (C2HC) follow at residues 61–88 and 96–112; these read CGFC…RVLC and CPLC…MRYC.

It belongs to the nanos family. In terms of assembly, interacts with ccnb1.

It is found in the cytoplasm. Its subcellular location is the perinuclear region. Its function is as follows. Acts as a translational repressor. Can mediate repression affecting different steps in the translation process: cap-driven, IRES-driven, polyadenylated RNAs or nonpolyadenylated RNAs. Essential for the development of primordial germ cells (PGCs) by ensuring their proper migration and survival. This Xenopus tropicalis (Western clawed frog) protein is Nanos homolog 1 (nanos1).